Reading from the N-terminus, the 489-residue chain is L-asparagine permease (489 aa).

The next 12 membrane-spanning stretches (helical) occupy residues 38–58, 62–82, 113–133, 150–170, 175–195, 223–243, 268–288, 302–322, 357–377, 382–402, 426–446, and 452–472; these read HVNM…GAGG, DAGP…FFVV, VAGW…ITAI, VLAL…VKIF, FWFA…GIFL, VMPV…LELV, VALF…SSLY, IGVP…AMSS, YGGI…NYLV, FEIV…IIMI, SPVT…LMWN, and RKTV…WFGV.

This sequence belongs to the amino acid-polyamine-organocation (APC) superfamily. Amino acid transporter (AAT) (TC 2.A.3.1) family.

It is found in the cell membrane. This is L-asparagine permease (ansP) from Streptomyces coelicolor (strain ATCC BAA-471 / A3(2) / M145).